We begin with the raw amino-acid sequence, 242 residues long: Segregation and condensation protein A (242 aa).

This sequence belongs to the ScpA family. In terms of assembly, component of a cohesin-like complex composed of ScpA, ScpB and the Smc homodimer, in which ScpA and ScpB bind to the head domain of Smc. The presence of the three proteins is required for the association of the complex with DNA.

It is found in the cytoplasm. Its function is as follows. Participates in chromosomal partition during cell division. May act via the formation of a condensin-like complex containing Smc and ScpB that pull DNA away from mid-cell into both cell halves. The chain is Segregation and condensation protein A from Lactococcus lactis subsp. cremoris (strain SK11).